The primary structure comprises 63 residues: Synergistic-type venom protein C9S3, chain 2 (63 aa).

Cystine bridges form between C3/C24, C17/C42, and C46/C57.

This sequence belongs to the three-finger toxin family. Short-chain subfamily. Aminergic toxin sub-subfamily. As to quaternary structure, heterodimer of C9S3 chain 1 (AC P01408) and chain 2, linked by at least two disulfide bonds. As to expression, expressed by the venom gland.

It is found in the secreted. In terms of biological role, this protein shows a synergetic toxic effect in that it enhances the toxicity of other D.angusticeps toxins. In Dendroaspis angusticeps (Eastern green mamba), this protein is Synergistic-type venom protein C9S3, chain 2.